A 143-amino-acid polypeptide reads, in one-letter code: MTEQNEELKKKLTPLQYEVTQNNGTEPPFRNEYYDLEAEGIYVDIVSGKPLFSSKDKYDAGCGWPSFTKPIDEEEVIEKEDRSHGMFRTEVRSKQADSHLGHVFPDGPGPNGLRYCINSAALRFIPKADLEKEGYGKYKALFD.

One can recognise a MsrB domain in the interval 5–127 (NEELKKKLTP…NSAALRFIPK (123 aa)). The active-site Nucleophile is the cysteine 116.

Belongs to the MsrB Met sulfoxide reductase family.

The catalysed reaction is L-methionyl-[protein] + [thioredoxin]-disulfide + H2O = L-methionyl-(R)-S-oxide-[protein] + [thioredoxin]-dithiol. This Halalkalibacterium halodurans (strain ATCC BAA-125 / DSM 18197 / FERM 7344 / JCM 9153 / C-125) (Bacillus halodurans) protein is Peptide methionine sulfoxide reductase MsrB.